The following is a 658-amino-acid chain: UvrABC system protein B (658 aa).

Residues 25 to 182 (ESLNGGNSHQ…KGLVDIQYSR (158 aa)) enclose the Helicase ATP-binding domain. Residue 38–45 (GVTGSGKT) participates in ATP binding. Residues 91 to 114 (YYDYYQPEAYIPQTDTYIEKDASI) carry the Beta-hairpin motif. One can recognise a Helicase C-terminal domain in the interval 429 to 595 (QIDDLYSEIN…TVQKKVHDVI (167 aa)). The region spanning 622–657 (KELIAKLQEEMKQAAKELEFEKAAELRDLIMELKTA) is the UVR domain.

It belongs to the UvrB family. Forms a heterotetramer with UvrA during the search for lesions. Interacts with UvrC in an incision complex.

It is found in the cytoplasm. In terms of biological role, the UvrABC repair system catalyzes the recognition and processing of DNA lesions. A damage recognition complex composed of 2 UvrA and 2 UvrB subunits scans DNA for abnormalities. Upon binding of the UvrA(2)B(2) complex to a putative damaged site, the DNA wraps around one UvrB monomer. DNA wrap is dependent on ATP binding by UvrB and probably causes local melting of the DNA helix, facilitating insertion of UvrB beta-hairpin between the DNA strands. Then UvrB probes one DNA strand for the presence of a lesion. If a lesion is found the UvrA subunits dissociate and the UvrB-DNA preincision complex is formed. This complex is subsequently bound by UvrC and the second UvrB is released. If no lesion is found, the DNA wraps around the other UvrB subunit that will check the other stand for damage. In Natranaerobius thermophilus (strain ATCC BAA-1301 / DSM 18059 / JW/NM-WN-LF), this protein is UvrABC system protein B.